Consider the following 377-residue polypeptide: tRNA(Met) cytidine acetate ligase (377 aa).

Residues 7-20 (VTEY…HLYH), glycine 100, asparagine 153, and arginine 178 contribute to the ATP site.

This sequence belongs to the TmcAL family.

It localises to the cytoplasm. It catalyses the reaction cytidine(34) in elongator tRNA(Met) + acetate + ATP = N(4)-acetylcytidine(34) in elongator tRNA(Met) + AMP + diphosphate. Catalyzes the formation of N(4)-acetylcytidine (ac(4)C) at the wobble position of elongator tRNA(Met), using acetate and ATP as substrates. First activates an acetate ion to form acetyladenylate (Ac-AMP) and then transfers the acetyl group to tRNA to form ac(4)C34. This Staphylococcus saprophyticus subsp. saprophyticus (strain ATCC 15305 / DSM 20229 / NCIMB 8711 / NCTC 7292 / S-41) protein is tRNA(Met) cytidine acetate ligase.